The following is a 376-amino-acid chain: Chaperone protein DnaJ (376 aa).

The region spanning 5–70 (DYYEILGVSK…QKRAAYDQYG (66 aa)) is the J domain. Residues 131–209 (GVTKEIRIPT…CHGHGRVERS (79 aa)) form a CR-type zinc finger. Residues Cys-144, Cys-147, Cys-161, Cys-164, Cys-183, Cys-186, Cys-197, and Cys-200 each coordinate Zn(2+). CXXCXGXG motif repeat units follow at residues 144-151 (CDVCHGSG), 161-168 (CPTCHGSG), 183-190 (CPHCQGRG), and 197-204 (CNKCHGHG).

Belongs to the DnaJ family. As to quaternary structure, homodimer. It depends on Zn(2+) as a cofactor.

Its subcellular location is the cytoplasm. In terms of biological role, participates actively in the response to hyperosmotic and heat shock by preventing the aggregation of stress-denatured proteins and by disaggregating proteins, also in an autonomous, DnaK-independent fashion. Unfolded proteins bind initially to DnaJ; upon interaction with the DnaJ-bound protein, DnaK hydrolyzes its bound ATP, resulting in the formation of a stable complex. GrpE releases ADP from DnaK; ATP binding to DnaK triggers the release of the substrate protein, thus completing the reaction cycle. Several rounds of ATP-dependent interactions between DnaJ, DnaK and GrpE are required for fully efficient folding. Also involved, together with DnaK and GrpE, in the DNA replication of plasmids through activation of initiation proteins. The chain is Chaperone protein DnaJ from Escherichia coli (strain K12 / DH10B).